Here is a 389-residue protein sequence, read N- to C-terminus: Lipid-A-disaccharide synthase (389 aa).

Belongs to the LpxB family.

It catalyses the reaction a lipid X + a UDP-2-N,3-O-bis[(3R)-3-hydroxyacyl]-alpha-D-glucosamine = a lipid A disaccharide + UDP + H(+). The protein operates within bacterial outer membrane biogenesis; LPS lipid A biosynthesis. Condensation of UDP-2,3-diacylglucosamine and 2,3-diacylglucosamine-1-phosphate to form lipid A disaccharide, a precursor of lipid A, a phosphorylated glycolipid that anchors the lipopolysaccharide to the outer membrane of the cell. This is Lipid-A-disaccharide synthase from Burkholderia multivorans (strain ATCC 17616 / 249).